The chain runs to 262 residues: T-cell surface glycoprotein YE1/48 (262 aa).

Topologically, residues 1 to 44 (MSEQEVTYSMVRFHKSAGLQKQVRPEETKGPREAGYRRCSFHWK) are cytoplasmic. A helical; Signal-anchor for type II membrane protein membrane pass occupies residues 45–66 (FIVIALGIFCFLLLVAVSVLAI). The Extracellular segment spans residues 67-262 (KIFQYDQQKN…CGKRLDKFPH (196 aa)). Residues asparagine 86, asparagine 103, and asparagine 123 are each glycosylated (N-linked (GlcNAc...) asparagine). The Cell attachment site motif lies at 137–139 (RGD). Residues 138 to 257 (GDKVYWFCYG…VFICICGKRL (120 aa)) enclose the C-type lectin domain. 4 cysteine pairs are disulfide-bonded: cysteine 145–cysteine 150, cysteine 163–cysteine 251, cysteine 167–cysteine 253, and cysteine 232–cysteine 245.

Homodimer; disulfide-linked. High, in T-lymphoma lines, very low in normal lymphocytes.

The protein resides in the membrane. Functionally, receptor on natural killer (NK) cells for H-2d alleles. Inhibits the activity of NK cells thus preventing cell lysis. This Mus musculus (Mouse) protein is T-cell surface glycoprotein YE1/48 (Klra1).